A 764-amino-acid polypeptide reads, in one-letter code: A-type ATP synthase subunit A (764 aa).

The protein belongs to the ATPase alpha/beta chains family. Has multiple subunits with at least A(3), B(3), C, D, E, F, H, I and proteolipid K(x). In terms of processing, this protein undergoes a protein self splicing that involves a post-translational excision of the VDE intervening region (intein) followed by peptide ligation.

Its subcellular location is the cell membrane. The enzyme catalyses ATP + H2O + 4 H(+)(in) = ADP + phosphate + 5 H(+)(out). Functionally, component of the A-type ATP synthase that produces ATP from ADP in the presence of a proton gradient across the membrane. The A chain is the catalytic subunit. The sequence is that of A-type ATP synthase subunit A from Thermoplasma acidophilum (strain ATCC 25905 / DSM 1728 / JCM 9062 / NBRC 15155 / AMRC-C165).